Reading from the N-terminus, the 124-residue chain is Holo-[acyl-carrier-protein] synthase (124 aa).

Positions 5 and 51 each coordinate Mg(2+).

This sequence belongs to the P-Pant transferase superfamily. AcpS family. It depends on Mg(2+) as a cofactor.

It is found in the cytoplasm. It carries out the reaction apo-[ACP] + CoA = holo-[ACP] + adenosine 3',5'-bisphosphate + H(+). Its function is as follows. Transfers the 4'-phosphopantetheine moiety from coenzyme A to a Ser of acyl-carrier-protein. The chain is Holo-[acyl-carrier-protein] synthase from Hydrogenobaculum sp. (strain Y04AAS1).